A 1128-amino-acid polypeptide reads, in one-letter code: Nck-associated protein 1 (1128 aa).

The tract at residues 640-665 (AVNKKSKKQTGKKGEPEREKPGVESM) is disordered. Basic and acidic residues predominate over residues 651 to 665 (KKGEPEREKPGVESM). The chain crosses the membrane as a helical span at residues 995 to 1015 (IACLLMVFVAVSMPTLASNVM).

The protein belongs to the HEM-1/HEM-2 family.

The protein resides in the cell membrane. The protein localises to the cell projection. It localises to the lamellipodium membrane. Part of the WAVE complex that regulates lamellipodia formation. The WAVE complex regulates actin filament reorganization via its interaction with the Arp2/3 complex. Actin remodeling activity is regulated by RAC1. Plays a role in neural tube closure. The sequence is that of Nck-associated protein 1 (nckap1) from Danio rerio (Zebrafish).